We begin with the raw amino-acid sequence, 600 residues long: Aspartate--tRNA(Asp/Asn) ligase (600 aa).

Residue glutamate 174 participates in L-aspartate binding. Positions 198 to 201 (QLFK) are aspartate. Arginine 220 lines the L-aspartate pocket. ATP-binding positions include 220–222 (RDE) and glutamine 229. Position 457 (histidine 457) interacts with L-aspartate. ATP is bound at residue glutamate 491. Residue arginine 498 coordinates L-aspartate. 543 to 546 (GLDR) contributes to the ATP binding site.

The protein belongs to the class-II aminoacyl-tRNA synthetase family. Type 1 subfamily. Homodimer.

The protein localises to the cytoplasm. The enzyme catalyses tRNA(Asx) + L-aspartate + ATP = L-aspartyl-tRNA(Asx) + AMP + diphosphate. Its function is as follows. Aspartyl-tRNA synthetase with relaxed tRNA specificity since it is able to aspartylate not only its cognate tRNA(Asp) but also tRNA(Asn). Reaction proceeds in two steps: L-aspartate is first activated by ATP to form Asp-AMP and then transferred to the acceptor end of tRNA(Asp/Asn). This is Aspartate--tRNA(Asp/Asn) ligase from Burkholderia vietnamiensis (strain G4 / LMG 22486) (Burkholderia cepacia (strain R1808)).